The chain runs to 271 residues: Elongation factor Ts (271 aa).

Residues 76–79 (TDFV) form an involved in Mg(2+) ion dislocation from EF-Tu region.

The protein belongs to the EF-Ts family.

It is found in the cytoplasm. In terms of biological role, associates with the EF-Tu.GDP complex and induces the exchange of GDP to GTP. It remains bound to the aminoacyl-tRNA.EF-Tu.GTP complex up to the GTP hydrolysis stage on the ribosome. The protein is Elongation factor Ts of Mycobacterium bovis (strain BCG / Pasteur 1173P2).